A 154-amino-acid polypeptide reads, in one-letter code: MINSLLITNNNGNIVFSKYYSNINDEKQSEYEKLLYQFTKDEWVNSKNEKHLVTEFSGYITVFTNVGDLMLFLCGSEEMDELALSDVFFPIIESLKDICKKKGVTEQNFIEQIPKFILYLDEIIQRGHLDQVQLESIQNYSSLKHDQPIKKDNV.

The protein belongs to the adaptor complexes small subunit family. Component of the TSET complex, a heterohexamer composed of tstA, tstB, tstC, tstD, tstE and tstF, which may act in plasma membrane turnover. tstA, tstB, tstC and tstD are likely to be the core complex members with tstE and tstF acting as associated scaffold proteins.

The protein resides in the cell membrane. The protein localises to the cytoplasm. The sequence is that of TSET complex member tstD from Dictyostelium discoideum (Social amoeba).